A 294-amino-acid polypeptide reads, in one-letter code: Small ribosomal subunit biogenesis GTPase RsgA 2, mitochondrial (294 aa).

The transit peptide at 1-68 directs the protein to the mitochondrion; the sequence is MQTFSSAAAL…RSFLAPVLPL (68 aa). One can recognise a CP-type G domain in the interval 155-294; the sequence is VSEVLDPPVA…VSFFLSYFIL (140 aa). 255–263 contributes to the GTP binding site; that stretch reads GPSGVGKSS.

The protein belongs to the TRAFAC class YlqF/YawG GTPase family.

It localises to the mitochondrion. The chain is Small ribosomal subunit biogenesis GTPase RsgA 2, mitochondrial from Arabidopsis thaliana (Mouse-ear cress).